Here is a 293-residue protein sequence, read N- to C-terminus: Nucleotide-binding protein Bcer98_3698 (293 aa).

ATP is bound at residue 14-21; it reads GMSGAGKT. 65-68 is a GTP binding site; that stretch reads DLRG.

The protein belongs to the RapZ-like family.

Its function is as follows. Displays ATPase and GTPase activities. This chain is Nucleotide-binding protein Bcer98_3698, found in Bacillus cytotoxicus (strain DSM 22905 / CIP 110041 / 391-98 / NVH 391-98).